Reading from the N-terminus, the 962-residue chain is Synphilin-1 (962 aa).

Disordered stretches follow at residues 80–99, 104–137, and 222–249; these read SPLK…DQKN, YQKG…EPSQ, and TALR…PAYE. 4 ANK repeats span residues 348-379, 383-412, 418-447, and 455-484; these read NGNN…CLNE, EQLT…AIAE, DFPS…EQGI, and EGNS…NVTM. Residues 522-548 adopt a coiled-coil conformation; sequence VKLTKQLKEQTVERVTLQSQLQQLLEA. Residues 548-590 form a disordered region; the sequence is AQKSEGKSLPSSPSSPSSPASTKSQWKALDTDEESTGKSKVGA. Residues 554-571 show a composition bias toward low complexity; that stretch reads KSLPSSPSSPSSPASTKS. The stretch at 602–631 is one ANK 5 repeat; that stretch reads VSSRARTKGKDEDSDKILRQLLGKEISENV. Residues 667 to 684 are compositionally biased toward low complexity; sequence RQLMQRSLSESDTDSNNS. The interval 667–852 is disordered; the sequence is RQLMQRSLSE…QRTSESGEQM (186 aa). The span at 685–699 shows a compositional bias: basic and acidic residues; that stretch reads EDPKNTPVKRADRPR. The ANK 6 repeat unit spans residues 698-728; that stretch reads PRPQPIVESVENVDSAESLHLMIKKHSLASG. Polar residues predominate over residues 772 to 790; that stretch reads PSTEATQSSPDSTAAQKVA. Residues 831-840 are compositionally biased toward basic and acidic residues; it reads NGEKDKDKGR.

In terms of assembly, associates with SNCA, RNF19A and PRKN. In terms of processing, ubiquitinated; mediated by SIAH1 or RNF19A and leading to its subsequent proteasomal degradation.

This chain is Synphilin-1 (Sncaip), found in Mus musculus (Mouse).